Consider the following 181-residue polypeptide: Regulator of G-protein signaling 5 (181 aa).

An RGS domain is found at 64–180 (SLDKLLQNSY…VRSEFYKELI (117 aa)).

In terms of tissue distribution, expressed in heart and muscle.

The protein localises to the cytoplasm. It is found in the membrane. Inhibits signal transduction by increasing the GTPase activity of G protein alpha subunits thereby driving them into their inactive GDP-bound form. Binds to G(i)-alpha and G(o)-alpha, but not to G(s)-alpha. This Mus musculus (Mouse) protein is Regulator of G-protein signaling 5 (Rgs5).